Reading from the N-terminus, the 560-residue chain is DNA ligase B (560 aa).

K124 serves as the catalytic N6-AMP-lysine intermediate.

This sequence belongs to the NAD-dependent DNA ligase family. LigB subfamily.

It catalyses the reaction NAD(+) + (deoxyribonucleotide)n-3'-hydroxyl + 5'-phospho-(deoxyribonucleotide)m = (deoxyribonucleotide)n+m + AMP + beta-nicotinamide D-nucleotide.. Functionally, catalyzes the formation of phosphodiester linkages between 5'-phosphoryl and 3'-hydroxyl groups in double-stranded DNA using NAD as a coenzyme and as the energy source for the reaction. This Escherichia coli O6:K15:H31 (strain 536 / UPEC) protein is DNA ligase B.